We begin with the raw amino-acid sequence, 193 residues long: dCTP deaminase, dUMP-forming (193 aa).

Residues 101 to 106 (KSSLGR), aspartate 119, 127 to 129 (TLE), glutamine 148, tyrosine 162, and glutamine 174 contribute to the dCTP site. Glutamate 129 serves as the catalytic Proton donor/acceptor.

The protein belongs to the dCTP deaminase family. In terms of assembly, homotrimer.

The enzyme catalyses dCTP + 2 H2O = dUMP + NH4(+) + diphosphate. Its pathway is pyrimidine metabolism; dUMP biosynthesis; dUMP from dCTP: step 1/1. In terms of biological role, bifunctional enzyme that catalyzes both the deamination of dCTP to dUTP and the hydrolysis of dUTP to dUMP without releasing the toxic dUTP intermediate. This Bifidobacterium adolescentis (strain ATCC 15703 / DSM 20083 / NCTC 11814 / E194a) protein is dCTP deaminase, dUMP-forming.